The chain runs to 216 residues: Somatotropin (216 aa).

The first 26 residues, 1-26 (MAAGPRTSMLLAFALLCLPWTQEVGA), serve as a signal peptide directing secretion. Position 45 (H45) interacts with Zn(2+). C78 and C189 form a disulfide bridge. Residue S131 is modified to Phosphoserine. E198 contributes to the Zn(2+) binding site. Cysteines 206 and 214 form a disulfide.

Belongs to the somatotropin/prolactin family.

The protein localises to the secreted. Its function is as follows. Plays an important role in growth control. Its major role in stimulating body growth is to stimulate the liver and other tissues to secrete IGF1. It stimulates both the differentiation and proliferation of myoblasts. It also stimulates amino acid uptake and protein synthesis in muscle and other tissues. This Delphinus delphis (Short-beaked common dolphin) protein is Somatotropin (GH1).